The sequence spans 49 residues: Isoflavone reductase homolog 2 (49 aa).

Position 5 to 11 (5 to 11 (GGTGYIG)) interacts with NADP(+).

This sequence belongs to the NmrA-type oxidoreductase family. Isoflavone reductase subfamily.

The protein localises to the cytoplasm. The chain is Isoflavone reductase homolog 2 from Pseudotsuga menziesii (Douglas-fir).